The sequence spans 448 residues: MHFVAISINHRTADVTLREQVAFRDDALRLAHEDLYETKAILENVILSTCNRTEVYAIVDQVHTGRYYIQRFLARSFGFEVDDIKDMSEVKVGDDAVEHLLRVTSGLDSIVLGETQILGQMRDAFFLAQNTGTTGTIFNHLFKQAITFAKKAHSETDIADNAVSVSYAAVELAKKVFGKLKSKHAVVIGAGEMGELSLLNLLGSGISNVTIVNRTLSKAKILAEKHNVSYDSLSALPSLLETTDIVISSTSAEDYIITNSMVKTISETRKLDSLVLIDIAVPRDIEPGIDAITNIFNYDVDDLKDLVDANLRERQLAAETIAGQIPEEIDSHNEWVNMLGVVPVIRALREKAMNIQAETMESIDRKLPDLSERERKVISKHTKSIINQMLKDPIKQAKELSTDKKSNEKLELFQNIFDIEAEDPREKAKLEKESRAKEILAHRIFSFE.

Residues 49 to 52 (TCNR), S109, 114 to 116 (ETQ), and Q120 contribute to the substrate site. Residue C50 is the Nucleophile of the active site. 189–194 (GAGEMG) is a binding site for NADP(+).

Belongs to the glutamyl-tRNA reductase family. As to quaternary structure, homodimer.

It catalyses the reaction (S)-4-amino-5-oxopentanoate + tRNA(Glu) + NADP(+) = L-glutamyl-tRNA(Glu) + NADPH + H(+). The protein operates within porphyrin-containing compound metabolism; protoporphyrin-IX biosynthesis; 5-aminolevulinate from L-glutamyl-tRNA(Glu): step 1/2. In terms of biological role, catalyzes the NADPH-dependent reduction of glutamyl-tRNA(Glu) to glutamate 1-semialdehyde (GSA). This Staphylococcus epidermidis (strain ATCC 35984 / DSM 28319 / BCRC 17069 / CCUG 31568 / BM 3577 / RP62A) protein is Glutamyl-tRNA reductase.